The primary structure comprises 434 residues: Angio-associated migratory cell protein (434 aa).

A disordered region spans residues 1–63 (MESESESGAA…EEEEEEGNEE (63 aa)). Ser-20 carries the phosphoserine modification. Residues 39-62 (DPDDLAQEMEDVDFEEEEEEEGNE) show a composition bias toward acidic residues. WD repeat units lie at residues 89 to 129 (LHSA…LLFE), 132 to 171 (GHKD…EVWS), 173 to 212 (EAGD…KTFQ), 214 to 254 (PNCP…HVLK), 258 to 299 (GHQG…GVFR), 315 to 354 (SESN…LRHQ), 356 to 395 (QHQS…LLTD), and 398 to 433 (GHTA…QRPD).

Expressed in metastatic melanoma, liver, skin, kidney, heart, lung, lymph node, skeletal muscle and brain, and also in A2058 melanoma cells and activated T-cells (at protein level). Expressed in blood vessels. Strongly expressed in endothelial cells, cytotrophoblasts, and poorly differentiated. colon adenocarcinoma cells found in lymphatics.

It localises to the cell membrane. Its subcellular location is the cytoplasm. In terms of biological role, plays a role in angiogenesis and cell migration. In smooth muscle cell migration, may act through the RhoA pathway. The sequence is that of Angio-associated migratory cell protein (AAMP) from Homo sapiens (Human).